Here is an 864-residue protein sequence, read N- to C-terminus: E3 ubiquitin-protein ligase Itchy (864 aa).

A C2 domain is found at 1 to 115 (MSDSGPQLDS…LKSNNMKLEE (115 aa)). S2 carries the post-translational modification N-acetylserine. Residues 151-164 (NGETSCSESTTQND) show a composition bias toward polar residues. Residues 151-294 (NGETSCSEST…SQAPLPPGWE (144 aa)) are disordered. Positions 165–174 (DGCRTRDDTR) are enriched in basic and acidic residues. Low complexity predominate over residues 195-206 (NGNNSPSLSNGG). S199 bears the Phosphoserine; by MAPK8 mark. A compositionally biased stretch (pro residues) spans 210–224 (SRPPRPSRPPPPTPR). Residue T222 is modified to Phosphothreonine; by MAPK8. Over residues 230-259 (NGSPSTNSDSDGSSTGSLPPTNTNVNTSTS) the composition is skewed to low complexity. A Phosphoserine; by MAPK8 modification is found at S232. 2 WW domains span residues 287–320 (APLPPGWEQRVDQHGRVYYVDHVEKRTTWDRPEP) and 319–352 (EPLPPGWERRVDNMGRIYYVDHFTRTTTWQRPTL). T346 is subject to Phosphothreonine; by SGK3. Positions 356-432 (RNYEQWQLQR…RITQWEDPRS (77 aa)) are required for interaction with FYN. Y381 carries the phosphotyrosine; by FYN modification. WW domains lie at 399-432 (GPLPPGWEKRTDSNGRVYFVNHNTRITQWEDPRS) and 439-472 (KPLPEGWEMRFTVDGIPYFVDHNRRATTYIDPRT). S411 is modified (phosphoserine; by SGK3). Residues 530-864 (SPQDLRRRLW…IEETEGFGQE (335 aa)) enclose the HECT domain. The interval 535 to 544 (RRRLWVIFPG) is MAP kinase docking site. C832 (glycyl thioester intermediate) is an active-site residue.

Monomer. Part of a ternary complex composed of SMAD3, ITCH/AIP4 and NEDD9/HEF1; within the complex NEDD9/HEF1 interacts (via N-terminus) with ITCH/AIP4 (via WW domains); the complex mediates ubiquitination and proteasomal degradation of NEDD9/HEF1. Interacts (via WW domains) with OCNL. Interacts (via WW domains) with NOTCH1. Interacts (via WW domains) JUN. Interacts with JUNB; the interaction promotes ITCH-mediated ubiquitination and degradation of JUNB. Interacts with FYN; the interaction phosphorylates ITCH on Tyr-381 decreasing binding of JUNB. Interacts (via WW domain 2) with N4BP1; the interaction inhibits the E3 ubiquitin-protein ligase activity. Interacts with NDFIP1 and NDFIP2; the interaction with NDFIP proteins activates the E3 ubiquitin-protein ligase and may induce its recruitment to exosomes. Interacts with ARHGEF7. Interacts with RNF11. Interacts (via the WW 1 domain) with NFE2 (via the PXY motif 1); the interaction promotes 'Lys-63'-linked ubiquitination of NFE2, retains it in the cytoplasm and prevents its transactivation activity. Interacts (via WW domains) with CXCR4 (via C-terminus); the interaction depends on CXCR4 phosphorylation. Found in a complex with E3 ligase DTX3L and ESCRT-0 components HGS and STAM. Interacts with DTX3L (via C-terminus); the interaction is increased upon CXCL12 stimulation and inhibits ITCH catalytic activity (the interaction is direct). Interacts with HGS. Interacts (via WW domains) with PCBP2 within a complex containing ITCH, MAVS and PCBP2. Interacts (via WW domains) with TXNIP (via C-terminus). Interacts with p15 BID. Interacts with ERBB4. Interacts with DTX1. Interacts with SPART. Interacts with SNX9 and SNX18. Interacts (via its WW domains) with ATN1. Interacts (via WW domains) with SGK3. Interacts with CBLC. Interacts with OTUD7B. Interacts (via WW domain 1,2 and 3) with PI4K2A; the interaction inhibits PI4K2A catalytic activity and promotes ITCH catalytic activity. Interacts with ARRDC4. Part of a complex containing ITCH, NDFIP1 and MAP3K7. Interacts with UBE2L3; the interaction is mediated by NDFIP1. Interacts with MAPK8/JNK1. Interacts (via WW domains) with ARRDC1 (via PPxY motifs); the interaction is direct and participates in the recruitment of the ubiquitin-protein ligase ITCH to the NOTCH1 receptor. Interacts (via WW domains) with ARRDC2. Interacts (via WW domains) with ARRDC3. Interacts directly with LDLRAD3; this interaction promotes ITCH auto-ubiquitination leading to its degradation. Interacts with ENTREP1; enhances the ubiquitination of CXCR4 by ITCH and its subsequent endocytosis. Interacts with USP12 and WDR48/UAF1; the interaction is more efficient when both USP12 and WDR48/UAF1 are involved and may facilitate the recruitment of the USP12 deubiquitinase complex to Notch. In terms of assembly, (Microbial infection) Interacts with Epstein-Barr virus LMP2A. Post-translationally, on T-cell activation, phosphorylation by the JNK cascade on serine and threonine residues surrounding the PRR domain accelerates the ubiquitination and degradation of JUN and JUNB. The increased ITCH catalytic activity due to phosphorylation by JNK1 may occur due to a conformational change disrupting the interaction between the PRR/WW motifs domain and the HECT domain and, thus exposing the HECT domain. Phosphorylation by FYN reduces interaction with JUNB and negatively controls JUN ubiquitination and degradation. Interacts directly with LDLRAD3; this interaction promotes ITCH auto-ubiquitination leading to its degradation. Monoubiquitinated. Autopolyubiquitinated with 'Lys-63' linkages which does not lead to protein degradation. Detected in uterus (at protein level). Widely expressed.

Its subcellular location is the cell membrane. It localises to the cytoplasm. It is found in the nucleus. The protein resides in the early endosome membrane. The protein localises to the endosome membrane. The catalysed reaction is S-ubiquitinyl-[E2 ubiquitin-conjugating enzyme]-L-cysteine + [acceptor protein]-L-lysine = [E2 ubiquitin-conjugating enzyme]-L-cysteine + N(6)-ubiquitinyl-[acceptor protein]-L-lysine.. The protein operates within protein modification; protein ubiquitination. Activated by NDFIP1- and NDFIP2-binding. Activated by PI4K2A-binding. Inhibited by DTX3L-binding. Inhibited by N4BP1 binding. In terms of biological role, acts as an E3 ubiquitin-protein ligase which accepts ubiquitin from an E2 ubiquitin-conjugating enzyme in the form of a thioester and then directly transfers the ubiquitin to targeted substrates. It catalyzes 'Lys-29'-, 'Lys-48'- and 'Lys-63'-linked ubiquitin conjugation. Involved in the control of inflammatory signaling pathways. Is an essential component of a ubiquitin-editing protein complex, comprising also TNFAIP3, TAX1BP1 and RNF11, that ensures the transient nature of inflammatory signaling pathways. Promotes the association of the complex after TNF stimulation. Once the complex is formed, TNFAIP3 deubiquitinates 'Lys-63' polyubiquitin chains on RIPK1 and catalyzes the formation of 'Lys-48'-polyubiquitin chains. This leads to RIPK1 proteasomal degradation and consequently termination of the TNF- or LPS-mediated activation of NFKB1. Ubiquitinates RIPK2 by 'Lys-63'-linked conjugation and influences NOD2-dependent signal transduction pathways. Regulates the transcriptional activity of several transcription factors involved in immune response. Ubiquitinates NFE2 by 'Lys-63' linkages and is implicated in the control of the development of hematopoietic lineages. Mediates JUN ubiquitination and degradation. Mediates JUNB ubiquitination and degradation. Critical regulator of type 2 helper T (Th2) cell cytokine production by inducing JUNB ubiquitination and degradation. Involved in the negative regulation of MAVS-dependent cellular antiviral responses. Ubiquitinates MAVS through 'Lys-48'-linked conjugation resulting in MAVS proteasomal degradation. Following ligand stimulation, regulates sorting of Wnt receptor FZD4 to the degradative endocytic pathway probably by modulating PI42KA activity. Ubiquitinates PI4K2A and negatively regulates its catalytic activity. Ubiquitinates chemokine receptor CXCR4 and regulates sorting of CXCR4 to the degradative endocytic pathway following ligand stimulation by ubiquitinating endosomal sorting complex required for transport ESCRT-0 components HGS and STAM. Targets DTX1 for lysosomal degradation and controls NOTCH1 degradation, in the absence of ligand, through 'Lys-29'-linked polyubiquitination. Ubiquitinates SNX9. Ubiquitinates MAP3K7 through 'Lys-48'-linked conjugation. Together with UBR5, involved in the regulation of apoptosis and reactive oxygen species levels through the ubiquitination and proteasomal degradation of TXNIP: catalyzes 'Lys-48'-/'Lys-63'-branched ubiquitination of TXNIP. ITCH synthesizes 'Lys-63'-linked chains, while UBR5 is branching multiple 'Lys-48'-linked chains of substrate initially modified. Mediates the antiapoptotic activity of epidermal growth factor through the ubiquitination and proteasomal degradation of p15 BID. Ubiquitinates BRAT1 and this ubiquitination is enhanced in the presence of NDFIP1. Ubiquitinates NEDD9/HEF1, resulting in proteasomal degradation of NEDD9/HEF1. The chain is E3 ubiquitin-protein ligase Itchy (Itch) from Mus musculus (Mouse).